The chain runs to 1849 residues: SH3 and multiple ankyrin repeat domains protein 2 (1849 aa).

The segment at 1–33 (MPRSPTSSEDEMAQSFSDYSVGSESDSSKEETI) is disordered. Residues 15–25 (SFSDYSVGSES) show a composition bias toward low complexity. 6 ANK repeats span residues 196–226 (TGET…HLDF), 230–259 (DGMT…SPDY), 263–293 (YGLT…TVCC), 297–326 (NGWH…DMSA), 330–359 (SGNT…NKEL), and 363–393 (NSQT…DIVP). Residues 451 to 493 (QQMPSKPEGAAKTIGSYVPGPRSRSPSLNRLGGAGEDGKRPQP) form a disordered region. An SH3 domain is found at 526–585 (VPGRLFVAVKPYQPQVDGEIPLHRGDRVKVLSIGEGGFWEGSARGHIGWFPAECVEEVQC). In terms of domain architecture, PDZ spans 626-720 (TVVLQKKDNE…HLVLKVVTVT (95 aa)). Basic and acidic residues predominate over residues 764 to 774 (SVRKKKDKPEE). Residues 764–808 (SVRKKKDKPEEIVPASKPSRAAENMAVEPRVATIKQRPSSRCFPA) are disordered. S831 carries the post-translational modification Phosphoserine. A Phosphothreonine modification is found at T860. The disordered stretch occupies residues 878-910 (LSMPDTSEDIPPPPQSVPPSPPPPSPTTYNCPK). Over residues 887-903 (IPPPPQSVPPSPPPPSP) the composition is skewed to pro residues. S960 bears the Phosphoserine mark. 4 disordered regions span residues 1013 to 1293 (LVKQ…RKGD), 1328 to 1371 (LQEE…TTVP), 1432 to 1526 (PALS…GGEN), and 1574 to 1594 (SFVI…PGMA). Residues 1040 to 1052 (STSSSGKSSQGSS) show a composition bias toward low complexity. The segment covering 1086 to 1097 (VRDREKRLEARR) has biased composition (basic and acidic residues). A Phosphoserine modification is found at S1099. Residues 1128–1138 (EEGDFADEDSA) are compositionally biased toward acidic residues. 3 stretches are compositionally biased toward low complexity: residues 1159-1170 (GGAEASAPGEAG), 1181-1199 (GPES…AGPG), and 1208-1221 (RLLD…LALS). Positions 1274–1293 (RRQETENKYETDLGRDRKGD) are enriched in basic and acidic residues. The residue at position 1278 (T1278) is a Phosphothreonine. The SH3-binding signature appears at 1327 to 1333 (ALQEEDE). A compositionally biased stretch (low complexity) spans 1343 to 1357 (SSPSEVPEGVSETEG). Positions 1445 to 1460 (TPQSPSLNSSQPTNSA) are enriched in polar residues. Basic and acidic residues predominate over residues 1494-1505 (VDSRSSSDHHLE). The span at 1506-1522 (TTSTISTVSSISTLSSE) shows a compositional bias: low complexity. Residues 1577 to 1588 (IPPPAPPPPPGS) are compositionally biased toward pro residues. The O-linked (GlcNAc) threonine glycan is linked to T1667. Residues 1678-1692 (FTVRPGTSQPITLQS) are compositionally biased toward polar residues. The segment at 1678–1776 (FTVRPGTSQP…SILQQPISNK (99 aa)) is disordered. A phosphoserine mark is found at S1709 and S1713. Low complexity-rich tracts occupy residues 1721–1738 (TLPA…PALS) and 1760–1774 (RSRS…QPIS). In terms of domain architecture, SAM spans 1786 to 1849 (WTKPDVADWL…ERALKQLLDR (64 aa)).

It belongs to the SHANK family. In terms of assembly, is part of a complex with DLG4/PSD-95 and DLGAP1/GKAP. Interacts with CTTN/cortactin SH3 domain, DLGAP1/GKAP and alpha-latrotoxin receptor 1. Interacts with DNM2, DBNL, GRID2, BAIAP2, SLC9A3, PLCB3 and CFTR. Interacts (via proline-rich region) with PDE4D. Interacts with ABI1 (via SH3 domain). In terms of tissue distribution, isoform 3 is present in epithelial colonic cells (at protein level).

It is found in the apical cell membrane. The protein resides in the cytoplasm. It localises to the synapse. Its subcellular location is the postsynaptic density. The protein localises to the cell projection. It is found in the growth cone. The protein resides in the dendritic spine. Seems to be an adapter protein in the postsynaptic density (PSD) of excitatory synapses that interconnects receptors of the postsynaptic membrane including NMDA-type and metabotropic glutamate receptors, and the actin-based cytoskeleton. May play a role in the structural and functional organization of the dendritic spine and synaptic junction. The polypeptide is SH3 and multiple ankyrin repeat domains protein 2 (SHANK2) (Homo sapiens (Human)).